We begin with the raw amino-acid sequence, 266 residues long: Undecaprenyl-diphosphatase (266 aa).

A run of 8 helical transmembrane segments spans residues 3 to 23 (MSLLSIVLLGIVEGVTEFLPV), 41 to 61 (GTETFDIVIQLGAILAVVVLY), 86 to 106 (VLVGFLPSAVIGAVAYGAIKA), 108 to 128 (LNTPIIVAVALILGGIAILVI), 149 to 171 (FGVGLVQCLSMIPGVSRSGATIM), 184 to 204 (AEYSFFLAIPTMLGATTLALW), 220 to 240 (IGFVVSFIVAMLVIRWFLGVV), and 245 to 265 (FAPFAWYRIIAGTAALIWLLA).

It belongs to the UppP family.

Its subcellular location is the cell inner membrane. It carries out the reaction di-trans,octa-cis-undecaprenyl diphosphate + H2O = di-trans,octa-cis-undecaprenyl phosphate + phosphate + H(+). Its function is as follows. Catalyzes the dephosphorylation of undecaprenyl diphosphate (UPP). Confers resistance to bacitracin. The polypeptide is Undecaprenyl-diphosphatase (Rhizorhabdus wittichii (strain DSM 6014 / CCUG 31198 / JCM 15750 / NBRC 105917 / EY 4224 / RW1) (Sphingomonas wittichii)).